We begin with the raw amino-acid sequence, 198 residues long: Segregation and condensation protein B (198 aa).

The tract at residues 169-198 (LADPAAEEPDQNEMDLFFDRFNQSKEQEEE) is disordered.

Belongs to the ScpB family. Homodimer. Homodimerization may be required to stabilize the binding of ScpA to the Smc head domains. Component of a cohesin-like complex composed of ScpA, ScpB and the Smc homodimer, in which ScpA and ScpB bind to the head domain of Smc. The presence of the three proteins is required for the association of the complex with DNA.

The protein resides in the cytoplasm. Its function is as follows. Participates in chromosomal partition during cell division. May act via the formation of a condensin-like complex containing Smc and ScpA that pull DNA away from mid-cell into both cell halves. This is Segregation and condensation protein B from Listeria monocytogenes serotype 4a (strain HCC23).